Here is a 584-residue protein sequence, read N- to C-terminus: Transcription factor 7-like 1 (584 aa).

A compositionally biased stretch (gly residues) spans 1-28 (MPQLGGGRGGAGGGGGGSGAGATSGGDD). Positions 1–71 (MPQLGGGRGG…VKSSLVNESE (71 aa)) are CTNNB1-binding. 3 disordered regions span residues 1–99 (MPQL…RDYF), 159–179 (ATVKDTRSPSPAHLSNKVPVV), and 194–231 (YSNDHFSPASPPTHLSPEIDPKTGIPRPPHPSELSPYY). The segment covering 64-78 (SSLVNESENQSSSSD) has biased composition (low complexity). The span at 80-99 (EAERRPQPARDAFQKPRDYF) shows a compositional bias: basic and acidic residues. The HMG box DNA-binding region spans 342–410 (VKKPLNAFML…LHAQLYPTWS (69 aa)). Residues 412 to 501 (RDNYGKKKKR…HSEQAQPLSL (90 aa)) form a disordered region. Residues 417–423 (KKKKRKR) carry the Nuclear localization signal motif. 2 stretches are compositionally biased toward low complexity: residues 427–437 (LSQTQSQQQIQ) and 470–491 (SALDSPATPSAALASPAAPAAT). Residues 492-501 (HSEQAQPLSL) show a composition bias toward polar residues.

It belongs to the TCF/LEF family. In terms of assembly, binds the armadillo repeat of CTNNB1 and forms a stable complex. Interacts with DAZAP2. In terms of tissue distribution, detected in the basal layer of epidermis and in outer root sheath and bulge of hair follicles.

It is found in the nucleus. Its function is as follows. Participates in the Wnt signaling pathway. Binds to DNA and acts as a repressor in the absence of CTNNB1, and as an activator in its presence. Necessary for the terminal differentiation of epidermal cells, the formation of keratohyalin granules and the development of the barrier function of the epidermis. The chain is Transcription factor 7-like 1 (Tcf7l1) from Mus musculus (Mouse).